A 150-amino-acid chain; its full sequence is MGIEIQTKPFGKMQVSERQILSFPEGLLGFEEYKKFALIEEEEESVFKWLQSTEEVDLAFVVIPPSLFKKEYKPLIPEQELLGIGINEIKESLTLVIVTVPGEDPSMMTANTQGPILINKETLIGKQFISRNESHSVREKIFESAAVEIG.

The protein belongs to the FliW family. In terms of assembly, interacts with translational regulator CsrA and flagellin(s).

Its subcellular location is the cytoplasm. Functionally, acts as an anti-CsrA protein, binds CsrA and prevents it from repressing translation of its target genes, one of which is flagellin. Binds to flagellin and participates in the assembly of the flagellum. This chain is Flagellar assembly factor FliW, found in Leptospira interrogans serogroup Icterohaemorrhagiae serovar copenhageni (strain Fiocruz L1-130).